A 166-amino-acid polypeptide reads, in one-letter code: Tetranectin-like protein (166 aa).

3 disulfides stabilise this stretch: Cys-37-Cys-47, Cys-64-Cys-160, and Cys-136-Cys-152. The region spanning 43–161 is the C-type lectin domain; sequence IHKKCYLASR…CRSEKRYICE (119 aa).

The sequence is that of Tetranectin-like protein from Carcharhinus perezii (Reef shark).